Reading from the N-terminus, the 169-residue chain is Probable prefoldin subunit 3 (169 aa).

Belongs to the prefoldin subunit alpha family. Heterohexamer of two PFD-alpha type and four PFD-beta type subunits.

Functionally, binds specifically to cytosolic chaperonin (c-CPN) and transfers target proteins to it. Binds to nascent polypeptide chain and promotes folding in an environment in which there are many competing pathways for nonnative proteins. The sequence is that of Probable prefoldin subunit 3 from Schizosaccharomyces pombe (strain 972 / ATCC 24843) (Fission yeast).